The chain runs to 430 residues: Serine hydroxymethyltransferase 2 (430 aa).

(6S)-5,6,7,8-tetrahydrofolate is bound by residues Leu-128 and 132–134 (GHL). An N6-(pyridoxal phosphate)lysine modification is found at Lys-237.

This sequence belongs to the SHMT family. Homodimer. Pyridoxal 5'-phosphate is required as a cofactor.

It is found in the cytoplasm. It carries out the reaction (6R)-5,10-methylene-5,6,7,8-tetrahydrofolate + glycine + H2O = (6S)-5,6,7,8-tetrahydrofolate + L-serine. It participates in one-carbon metabolism; tetrahydrofolate interconversion. It functions in the pathway amino-acid biosynthesis; glycine biosynthesis; glycine from L-serine: step 1/1. Its function is as follows. Catalyzes the reversible interconversion of serine and glycine with tetrahydrofolate (THF) serving as the one-carbon carrier. This reaction serves as the major source of one-carbon groups required for the biosynthesis of purines, thymidylate, methionine, and other important biomolecules. Also exhibits THF-independent aldolase activity toward beta-hydroxyamino acids, producing glycine and aldehydes, via a retro-aldol mechanism. This chain is Serine hydroxymethyltransferase 2, found in Rhodospirillum rubrum (strain ATCC 11170 / ATH 1.1.1 / DSM 467 / LMG 4362 / NCIMB 8255 / S1).